Reading from the N-terminus, the 509-residue chain is Histidine--tRNA ligase (509 aa).

This sequence belongs to the class-II aminoacyl-tRNA synthetase family. In terms of assembly, homodimer.

It localises to the cytoplasm. It carries out the reaction tRNA(His) + L-histidine + ATP = L-histidyl-tRNA(His) + AMP + diphosphate + H(+). The sequence is that of Histidine--tRNA ligase from Rhodopseudomonas palustris (strain TIE-1).